Consider the following 228-residue polypeptide: Cytochrome c oxidase subunit 2 (228 aa).

Residues 1–26 (MATWANLGLQNSSSPLMEQLNFFHDH) are Mitochondrial intermembrane-facing. The helical transmembrane segment at 27-48 (TVLILIMITVMITYVMGMLFFN) threads the bilayer. The Mitochondrial matrix segment spans residues 49–62 (KFTNRYLLHGQTIE). Residues 63-82 (IIWTILPAIILMFIAFPSLR) traverse the membrane as a helical segment. Topologically, residues 83-228 (LLYLLDEINS…FIKWVSSQLN (146 aa)) are mitochondrial intermembrane. H161, C196, E198, C200, H204, and M207 together coordinate Cu cation. E198 provides a ligand contact to Mg(2+).

Belongs to the cytochrome c oxidase subunit 2 family. As to quaternary structure, component of the cytochrome c oxidase (complex IV, CIV), a multisubunit enzyme composed of a catalytic core of 3 subunits and several supernumerary subunits. The complex exists as a monomer or a dimer and forms supercomplexes (SCs) in the inner mitochondrial membrane with ubiquinol-cytochrome c oxidoreductase (cytochrome b-c1 complex, complex III, CIII). Cu cation serves as cofactor.

It localises to the mitochondrion inner membrane. The enzyme catalyses 4 Fe(II)-[cytochrome c] + O2 + 8 H(+)(in) = 4 Fe(III)-[cytochrome c] + 2 H2O + 4 H(+)(out). In terms of biological role, component of the cytochrome c oxidase, the last enzyme in the mitochondrial electron transport chain which drives oxidative phosphorylation. The respiratory chain contains 3 multisubunit complexes succinate dehydrogenase (complex II, CII), ubiquinol-cytochrome c oxidoreductase (cytochrome b-c1 complex, complex III, CIII) and cytochrome c oxidase (complex IV, CIV), that cooperate to transfer electrons derived from NADH and succinate to molecular oxygen, creating an electrochemical gradient over the inner membrane that drives transmembrane transport and the ATP synthase. Cytochrome c oxidase is the component of the respiratory chain that catalyzes the reduction of oxygen to water. Electrons originating from reduced cytochrome c in the intermembrane space (IMS) are transferred via the dinuclear copper A center (CU(A)) of subunit 2 and heme A of subunit 1 to the active site in subunit 1, a binuclear center (BNC) formed by heme A3 and copper B (CU(B)). The BNC reduces molecular oxygen to 2 water molecules using 4 electrons from cytochrome c in the IMS and 4 protons from the mitochondrial matrix. This Culex quinquefasciatus (Southern house mosquito) protein is Cytochrome c oxidase subunit 2 (COII).